A 166-amino-acid chain; its full sequence is uncharacterized protein (166 aa).

A helical membrane pass occupies residues phenylalanine 34–methionine 54. Disordered stretches follow at residues glutamine 73–phenylalanine 93 and threonine 123–valine 166.

The protein resides in the vacuole membrane. This is an uncharacterized protein from Schizosaccharomyces pombe (strain 972 / ATCC 24843) (Fission yeast).